A 791-amino-acid chain; its full sequence is Disintegrin and metalloproteinase domain-containing protein 1a (791 aa).

Residues 1 to 65 (MSVAAAGRGF…LLIFLPSTFC (65 aa)) form the signal peptide. N72 carries N-linked (GlcNAc...) asparagine glycosylation. A disordered region spans residues 201–220 (CSVTPKDSPGDTSHPPRSRK). The Peptidase M12B domain maps to 235–429 (KYVEMFVVVN…HRGACLLDEP (195 aa)). N256 is a glycosylation site (N-linked (GlcNAc...) asparagine). 3 cysteine pairs are disulfide-bonded: C345–C424, C385–C408, and C387–C393. H370 is a binding site for Zn(2+). Residue E371 is part of the active site. Zn(2+) is bound by residues H374 and H380. 2 N-linked (GlcNAc...) asparagine glycosylation sites follow: N407 and N484. Residues 438–522 (AANCGNGVVE…ECPANSYMQD (85 aa)) enclose the Disintegrin domain. A disulfide bridge links C494 with C514. N-linked (GlcNAc...) asparagine glycosylation is present at N630. The EGF-like domain maps to 663 to 697 (LQYNCEPQEMCHGNGVCNNFKHCHCDAGFAPPDCS). 3 disulfides stabilise this stretch: C667–C679, C673–C685, and C687–C696. Residues 741–761 (VMVLVVPIFLVVLLCCLMLIA) traverse the membrane as a helical segment. At 762-791 (YLWSEVQEVVSPPSSSESSSSSSWSDSDSQ) the chain is on the cytoplasmic side. The tract at residues 772–791 (SPPSSSESSSSSSWSDSDSQ) is disordered.

In terms of assembly, heterodimer with ADAM2/fertilin subunit beta. Testis.

It is found in the membrane. Functionally, may be involved in sperm-egg fusion. The polypeptide is Disintegrin and metalloproteinase domain-containing protein 1a (Adam1a) (Mus musculus (Mouse)).